Reading from the N-terminus, the 635-residue chain is Iron transport multicopper oxidase FET3 (635 aa).

The signal sequence occupies residues 1–17 (MMVPLLLSTYFITAVYG). Over 18–559 (ATHTFHWTTG…KSIPTGFTKK (542 aa)) the chain is Extracellular. Plastocyanin-like domains follow at residues 42 to 140 (ITCN…FVIE) and 190 to 292 (NLIL…LQLN). N-linked (GlcNAc...) asparagine glycans are attached at residues asparagine 70 and asparagine 73. Cu cation-binding residues include histidine 77 and histidine 79. Asparagine 109 carries an N-linked (GlcNAc...) asparagine glycan. Cu cation-binding residues include histidine 122 and histidine 124. N-linked (GlcNAc...) asparagine glycans are attached at residues asparagine 194, asparagine 198, asparagine 244, asparagine 265, asparagine 292, and asparagine 359. Residues 382–501 (NPFIYGTNTN…QGLAVVMVED (120 aa)) form the Plastocyanin-like 3 domain. Histidine 413, histidine 416, and histidine 418 together coordinate Cu cation. N-linked (GlcNAc...) asparagine glycosylation is present at asparagine 443. Residues histidine 483, cysteine 484, histidine 485, and histidine 489 each coordinate Cu cation. The N-linked (GlcNAc...) asparagine glycan is linked to asparagine 535. A helical membrane pass occupies residues 560–580 (GIIAMTFSCLAGVLGITMIAI). At 581–628 (YGFSEIPEPEIKVMRNLHLNPEDVLEKTSSSSVISASNSSSLEDSRNQ) the chain is on the cytoplasmic side.

Belongs to the multicopper oxidase family. Cu cation is required as a cofactor.

It localises to the cell membrane. In terms of biological role, iron transport multicopper ferroxidase required for Fe(2+) high affinity uptake. Required to oxidize Fe(2+) and release it from the transporter. Essential component of copper-dependent iron transport. The sequence is that of Iron transport multicopper oxidase FET3 (FET3) from Candida glabrata (strain ATCC 2001 / BCRC 20586 / JCM 3761 / NBRC 0622 / NRRL Y-65 / CBS 138) (Yeast).